The primary structure comprises 407 residues: Na(+)-translocating NADH-quinone reductase subunit F (407 aa).

A helical membrane pass occupies residues 4-24 (IILGVFFFTAIVVALVFVILG). The 2Fe-2S ferredoxin-type domain occupies 33-125 (GNVEVLINGE…NMKIHVHEEV (93 aa)). The [2Fe-2S] cluster site is built by Cys-68, Cys-74, Cys-77, and Cys-109. The FAD-binding FR-type domain maps to 128–269 (VKKWECTVRS…SGPFGEFFAR (142 aa)).

The protein belongs to the NqrF family. As to quaternary structure, composed of six subunits; NqrA, NqrB, NqrC, NqrD, NqrE and NqrF. [2Fe-2S] cluster serves as cofactor. The cofactor is FAD.

The protein localises to the cell inner membrane. The enzyme catalyses a ubiquinone + n Na(+)(in) + NADH + H(+) = a ubiquinol + n Na(+)(out) + NAD(+). Functionally, NQR complex catalyzes the reduction of ubiquinone-1 to ubiquinol by two successive reactions, coupled with the transport of Na(+) ions from the cytoplasm to the periplasm. The first step is catalyzed by NqrF, which accepts electrons from NADH and reduces ubiquinone-1 to ubisemiquinone by a one-electron transfer pathway. This Methylococcus capsulatus (strain ATCC 33009 / NCIMB 11132 / Bath) protein is Na(+)-translocating NADH-quinone reductase subunit F.